The chain runs to 459 residues: Putrescine aminotransferase (459 aa).

Pyridoxal 5'-phosphate contacts are provided by residues 150–151 (GT) and glutamine 274. N6-(pyridoxal phosphate)lysine is present on lysine 300. Pyridoxal 5'-phosphate is bound at residue threonine 332.

The protein belongs to the class-III pyridoxal-phosphate-dependent aminotransferase family. Putrescine aminotransferase subfamily. Pyridoxal 5'-phosphate is required as a cofactor.

It carries out the reaction an alkane-alpha,omega-diamine + 2-oxoglutarate = an omega-aminoaldehyde + L-glutamate. It catalyses the reaction putrescine + 2-oxoglutarate = 1-pyrroline + L-glutamate + H2O. The enzyme catalyses cadaverine + 2-oxoglutarate = 5-aminopentanal + L-glutamate. It functions in the pathway amine and polyamine degradation; putrescine degradation; 4-aminobutanal from putrescine (transaminase route): step 1/1. Its function is as follows. Catalyzes the aminotransferase reaction from putrescine to 2-oxoglutarate, leading to glutamate and 4-aminobutanal, which spontaneously cyclizes to form 1-pyrroline. This is the first step in one of two pathways for putrescine degradation, where putrescine is converted into 4-aminobutanoate (gamma-aminobutyrate or GABA) via 4-aminobutanal. Also functions as a cadaverine transaminase in a a L-lysine degradation pathway to succinate that proceeds via cadaverine, glutarate and L-2-hydroxyglutarate. The polypeptide is Putrescine aminotransferase (Salmonella agona (strain SL483)).